The chain runs to 425 residues: Serine--tRNA ligase (425 aa).

The tract at residues 110–134 (NLPSADAPEGKSEADNVEVKRWGEP) is disordered. A compositionally biased stretch (basic and acidic residues) spans 117–134 (PEGKSEADNVEVKRWGEP). 233 to 235 (TAE) contacts L-serine. 264–266 (RRE) lines the ATP pocket. Residue E287 participates in L-serine binding. 351–354 (EISS) serves as a coordination point for ATP. L-serine is bound at residue S385.

Belongs to the class-II aminoacyl-tRNA synthetase family. Type-1 seryl-tRNA synthetase subfamily. In terms of assembly, homodimer. The tRNA molecule binds across the dimer.

It is found in the cytoplasm. The enzyme catalyses tRNA(Ser) + L-serine + ATP = L-seryl-tRNA(Ser) + AMP + diphosphate + H(+). It carries out the reaction tRNA(Sec) + L-serine + ATP = L-seryl-tRNA(Sec) + AMP + diphosphate + H(+). It participates in aminoacyl-tRNA biosynthesis; selenocysteinyl-tRNA(Sec) biosynthesis; L-seryl-tRNA(Sec) from L-serine and tRNA(Sec): step 1/1. Catalyzes the attachment of serine to tRNA(Ser). Is also able to aminoacylate tRNA(Sec) with serine, to form the misacylated tRNA L-seryl-tRNA(Sec), which will be further converted into selenocysteinyl-tRNA(Sec). This Synechococcus sp. (strain RCC307) protein is Serine--tRNA ligase.